The following is a 122-amino-acid chain: Large ribosomal subunit protein uL18 (122 aa).

It belongs to the universal ribosomal protein uL18 family. In terms of assembly, part of the 50S ribosomal subunit; part of the 5S rRNA/L5/L18/L25 subcomplex. Contacts the 5S and 23S rRNAs.

Its function is as follows. This is one of the proteins that bind and probably mediate the attachment of the 5S RNA into the large ribosomal subunit, where it forms part of the central protuberance. The sequence is that of Large ribosomal subunit protein uL18 from Thermotoga neapolitana (strain ATCC 49049 / DSM 4359 / NBRC 107923 / NS-E).